A 213-amino-acid chain; its full sequence is ATP-dependent Clp protease proteolytic subunit (213 aa).

Residue Ser114 is the Nucleophile of the active site. His139 is an active-site residue.

Belongs to the peptidase S14 family. As to quaternary structure, fourteen ClpP subunits assemble into 2 heptameric rings which stack back to back to give a disk-like structure with a central cavity, resembling the structure of eukaryotic proteasomes.

The protein localises to the cytoplasm. The enzyme catalyses Hydrolysis of proteins to small peptides in the presence of ATP and magnesium. alpha-casein is the usual test substrate. In the absence of ATP, only oligopeptides shorter than five residues are hydrolyzed (such as succinyl-Leu-Tyr-|-NHMec, and Leu-Tyr-Leu-|-Tyr-Trp, in which cleavage of the -Tyr-|-Leu- and -Tyr-|-Trp bonds also occurs).. Functionally, cleaves peptides in various proteins in a process that requires ATP hydrolysis. Has a chymotrypsin-like activity. Plays a major role in the degradation of misfolded proteins. This Methylobacillus flagellatus (strain ATCC 51484 / DSM 6875 / VKM B-1610 / KT) protein is ATP-dependent Clp protease proteolytic subunit.